A 333-amino-acid polypeptide reads, in one-letter code: Cinnamoyl-CoA reductase 1 (333 aa).

Residues 13-19 (GAGGFIA), Arg38, Lys44, 64-65 (DL), 84-86 (TAS), Tyr157, Lys161, 184-187 (PVLV), and Ser199 contribute to the NADP(+) site. An intrachain disulfide couples Cys150 to Cys158. Catalysis depends on Lys161, which acts as the Proton donor.

Belongs to the NAD(P)-dependent epimerase/dehydratase family. Dihydroflavonol-4-reductase subfamily. Post-translationally, the formation of a reversible disulfide bond reduces activity by perturbing the positioning of nearby catalytic residues. In terms of tissue distribution, expressed in flowers, leaves and stems.

It is found in the cytoplasm. It catalyses the reaction (E)-coniferaldehyde + NADP(+) + CoA = (E)-feruloyl-CoA + NADPH + H(+). The enzyme catalyses (E)-4-coumaraldehyde + NADP(+) + CoA = (E)-4-coumaroyl-CoA + NADPH + H(+). It carries out the reaction (E)-sinapaldehyde + NADP(+) + CoA = (E)-sinapoyl-CoA + NADPH + H(+). The catalysed reaction is (E)-cinnamaldehyde + NADP(+) + CoA = (E)-cinnamoyl-CoA + NADPH + H(+). It functions in the pathway aromatic compound metabolism; phenylpropanoid biosynthesis. With respect to regulation, inhibited by sodium iodide-mediated oxidation. Functionally, involved in the latter stages of lignin biosynthesis. Catalyzes one of the last steps of monolignol biosynthesis, the conversion of cinnamoyl-CoAs into their corresponding cinnamaldehydes. Mediates the conversion of feruloyl CoA to coniferylaldehyde. Also active toward p-coumaroyl-CoA and sinapoyl-CoA. Involved in the production of floral volatile phenylpropanoids in flowers of fragrant cultivars (e.g. cv. Mitchell and cv. V26) from cinnamic acid, a common precursor with the anthocyanin biosynthesis pathway involved in flower pigmentation. This Petunia hybrida (Petunia) protein is Cinnamoyl-CoA reductase 1.